A 176-amino-acid polypeptide reads, in one-letter code: Replication restart protein PriC (176 aa).

It belongs to the PriC family. As to quaternary structure, component of the replication restart primosome, which is composed of PriA, PriB, PriC, DnaB and DnaT; DnaG primase associates transiently with this complex. Interacts with the C-terminus of SSB; this interaction is required to load the main replicative helicase onto substrate replication forks. Interacts with helicase DnaB alone and in the DnaB-DnaC complex, probably 1:1 binding with DnaB. Interacts with DnaT.

Its function is as follows. Involved in the restart of stalled replication forks, which reloads the DnaB replicative helicase on sites other than the origin of replication. Recognizes abandoned replication forks and remodels DNA single-stranded binding protein (SSB) on ssDNA to uncover a loading site for DnaB. There are several restart pathways, the PriA-PriC pathway is a minor restart pathway. Part of the minor PriC-Rep pathway for restart of stalled replication forks, which has a different substrate specificity than PriA. Part of the major restart pathway with PriA, PriB, DnaB, DnaT and DnaG primase. priB and priC have redundant roles in the cell. Binds 7-9 nucleotides of single-stranded (ss)DNA. The protein is Replication restart protein PriC of Klebsiella pneumoniae subsp. pneumoniae (strain ATCC 700721 / MGH 78578).